A 249-amino-acid chain; its full sequence is Type III pantothenate kinase (249 aa).

Residue 8 to 15 (DAGNSRLK) coordinates ATP. Residues Tyr95 and 102–105 (GVDR) contribute to the substrate site. Catalysis depends on Asp104, which acts as the Proton acceptor. Asp125 contributes to the K(+) binding site. Thr128 lines the ATP pocket. Thr179 lines the substrate pocket.

The protein belongs to the type III pantothenate kinase family. In terms of assembly, homodimer. NH4(+) serves as cofactor. Requires K(+) as cofactor.

The protein resides in the cytoplasm. The catalysed reaction is (R)-pantothenate + ATP = (R)-4'-phosphopantothenate + ADP + H(+). Its pathway is cofactor biosynthesis; coenzyme A biosynthesis; CoA from (R)-pantothenate: step 1/5. In terms of biological role, catalyzes the phosphorylation of pantothenate (Pan), the first step in CoA biosynthesis. The chain is Type III pantothenate kinase from Alkalilimnicola ehrlichii (strain ATCC BAA-1101 / DSM 17681 / MLHE-1).